The chain runs to 249 residues: NADH dehydrogenase [ubiquinone] flavoprotein 2, mitochondrial (249 aa).

The transit peptide at 1-32 (MFFSAALRARAAGLTAQWGRHVRNLHKTAMQN) directs the protein to the mitochondrion. The residue at position 61 (lysine 61) is an N6-acetyllysine. 4 residues coordinate [2Fe-2S] cluster: cysteine 135, cysteine 140, cysteine 176, and cysteine 180. Tyrosine 193 carries the phosphotyrosine; by SRC modification. A disordered region spans residues 213 to 249 (IPKPGPRSGRFSCEPAGGLTSLTEPPKGPGFGVQAGL).

It belongs to the complex I 24 kDa subunit family. In terms of assembly, core subunit of respiratory chain NADH dehydrogenase (Complex I) which is composed of 45 different subunits. This is a component of the flavoprotein-sulfur (FP) fragment of the enzyme. It depends on [2Fe-2S] cluster as a cofactor.

The protein localises to the mitochondrion inner membrane. The enzyme catalyses a ubiquinone + NADH + 5 H(+)(in) = a ubiquinol + NAD(+) + 4 H(+)(out). Core subunit of the mitochondrial membrane respiratory chain NADH dehydrogenase (Complex I) which catalyzes electron transfer from NADH through the respiratory chain, using ubiquinone as an electron acceptor. Parts of the peripheral arm of the enzyme, where the electrons from NADH are accepted by flavin mononucleotide (FMN) and then passed along a chain of iron-sulfur clusters by electron tunnelling to the final acceptor ubiquinone. Contains one iron-sulfur cluster. The polypeptide is NADH dehydrogenase [ubiquinone] flavoprotein 2, mitochondrial (Gorilla gorilla gorilla (Western lowland gorilla)).